Reading from the N-terminus, the 416-residue chain is Tyrosine--tRNA ligase (416 aa).

The short motif at 55 to 64 (PTGSEIHLGH) is the 'HIGH' region element. The 'KMSKS' region motif lies at 249–253 (KMSKS). Lys-252 provides a ligand contact to ATP. An S4 RNA-binding domain is found at 352-416 (TKAFHLLSSI…GKKTFRRISN (65 aa)).

This sequence belongs to the class-I aminoacyl-tRNA synthetase family. TyrS type 2 subfamily. As to quaternary structure, homodimer.

Its subcellular location is the cytoplasm. The enzyme catalyses tRNA(Tyr) + L-tyrosine + ATP = L-tyrosyl-tRNA(Tyr) + AMP + diphosphate + H(+). Catalyzes the attachment of tyrosine to tRNA(Tyr) in a two-step reaction: tyrosine is first activated by ATP to form Tyr-AMP and then transferred to the acceptor end of tRNA(Tyr). This Prochlorococcus marinus (strain SARG / CCMP1375 / SS120) protein is Tyrosine--tRNA ligase.